The primary structure comprises 736 residues: Dynamin-1-like protein (736 aa).

The residue at position 1 (Met1) is an N-acetylmethionine. Residues 22–302 (IIQLPQIVVV…LMHHIRDCLP (281 aa)) form the Dynamin-type G domain. Residues 32-39 (GTQSSGKS) are G1 motif. 32 to 40 (GTQSSGKSS) contacts GTP. The G2 motif stretch occupies residues 58 to 60 (VTR). Positions 146-149 (DLPG) are G3 motif. The interval 215–218 (TKLD) is G4 motif. GTP contacts are provided by residues 215–221 (TKLDLMD) and 246–249 (NRSQ). Residues 245-248 (VNRS) form a G5 motif region. A middle domain region spans residues 344–489 (YCNTIEGTAK…NEMVHNLVAI (146 aa)). Residues 448–685 (NYSTQELLRF…NHVKDTLQSE (238 aa)) are interaction with GSK3B. The tract at residues 502-569 (ADACGLMNNN…IQDNRRETKN (68 aa)) is b domain. The interval 522-554 (RELPSAGSRDKSSKVPSALAPASQEPPPAASAE) is disordered. Ser529 is modified (phosphoserine). Glycyl lysine isopeptide (Lys-Gly) (interchain with G-Cter in SUMO) cross-links involve residues Lys532, Lys535, Lys558, and Lys568. The interval 542–736 (PASQEPPPAA…IAEIRETHLW (195 aa)) is C-terminal dimerization domain. The segment at 566-588 (ETKNVPSAGGGIGDGGQEPTTGN) is disordered. O-linked (GlcNAc) threonine glycans are attached at residues Thr585 and Thr586. Residue Lys594 forms a Glycyl lysine isopeptide (Lys-Gly) (interchain with G-Cter in SUMO) linkage. N6-acetyllysine; alternate is present on Lys597. Residue Lys597 forms a Glycyl lysine isopeptide (Lys-Gly) (interchain with G-Cter in SUMO); alternate linkage. Lys606 is covalently cross-linked (Glycyl lysine isopeptide (Lys-Gly) (interchain with G-Cter in SUMO)). At Ser607 the chain carries Phosphoserine. Lys608 participates in a covalent cross-link: Glycyl lysine isopeptide (Lys-Gly) (interchain with G-Cter in SUMO). Ser616 bears the Phosphoserine; by PINK1 mark. Ser637 is subject to Phosphoserine; by CAMK1 and PKA. Cys644 carries the post-translational modification S-nitrosocysteine. The GED domain maps to 644–735 (CEVIERLIKS…IIAEIRETHL (92 aa)). Positions 654–668 (YFLIVRKNIQDSVPK) are important for homodimerization.

The protein belongs to the TRAFAC class dynamin-like GTPase superfamily. Dynamin/Fzo/YdjA family. As to quaternary structure, homotetramer; dimerizes through the N-terminal GTP-middle region of one molecule binding to the GED domain of another DNM1L molecule. Oligomerizes in a GTP-dependent manner to form membrane-associated tubules with a spiral pattern. Interacts with GSK3B and MARCHF5. Interacts (via the GTPase and B domains) with UBE2I; the interaction promotes sumoylation of DNM1L, mainly in its B domain. Interacts with PPP3CA; the interaction dephosphorylates DNM1L and regulates its transition to mitochondria. Interacts with BCL2L1 isoform BCL-X(L) and CLTA; DNM1L and BCL2L1 isoform BCL-X(L) may form a complex in synaptic vesicles that also contains clathrin and MFF. Interacts with MFF; the interaction is inhibited by C11orf65/MFI. Interacts with FIS1. Interacts with MIEF2 and MIEF1; GTP-dependent, regulates GTP hydrolysis and DNM1L oligomerization. Interacts with PGAM5; this interaction leads to dephosphorylation at Ser-656 and activation of GTPase activity and eventually to mitochondria fragmentation. Interacts with RALBP1; during mitosis, recruits DNM1L to the mitochondrion and mediates its activation by the mitotic kinase cyclin B-CDK1. Interacts with FUNDC1; this interaction recruits DNM1L/DRP1 at ER-mitochondria contact sites. Post-translationally, phosphorylation/dephosphorylation events on two sites near the GED domain regulate mitochondrial fission. Phosphorylation on Ser-637 inhibits mitochondrial fission probably through preventing intramolecular interaction. Dephosphorylated on this site by PPP3CA which promotes mitochondrial fission. Phosphorylation on Ser-616 by Pink1 activates the GTPase activity and promotes mitochondrial fission. Phosphorylated in a circadian manner at Ser-637. Dephosphorylated by PGAM5. In terms of processing, sumoylated on various lysine residues within the B domain, probably by MUL1. Sumoylation positively regulates mitochondrial fission. Desumoylated by SENP5 during G2/M transition of mitosis. Appears to be linked to its catalytic activity. S-nitrosylation increases DNM1L dimerization, mitochondrial fission and causes neuronal damage. Post-translationally, O-GlcNAcylation augments the level of the GTP-bound active form of DNM1L and induces translocation from the cytoplasm to mitochondria in cardiomyocytes. It also decreases phosphorylation at Ser-637. In terms of processing, ubiquitination by MARCHF5 affects mitochondrial morphology. Expressed in the cerebellum and in several regions of the cerebrum and diencephalon. Strongly expressed in the cerebellar Purkinje cells and in the pontile giant neurons. As to expression, widely expressed. In terms of tissue distribution, brain-specific. Brain-specific (at protein level). Expressed in most of the subregions of the brain, including the cerebellum, midbrain, hippocampus, striatum, cerebral cortex, and brain stem. Weakly expressed in the olfactory bulb.

The protein localises to the cytoplasm. It is found in the cytosol. It localises to the golgi apparatus. Its subcellular location is the endomembrane system. The protein resides in the mitochondrion outer membrane. The protein localises to the peroxisome. It is found in the membrane. It localises to the clathrin-coated pit. Its subcellular location is the cytoplasmic vesicle. The protein resides in the secretory vesicle. The protein localises to the synaptic vesicle membrane. It is found in the lysosome. It localises to the late endosome. Its subcellular location is the cell membrane. The protein resides in the postsynaptic density. The enzyme catalyses GTP + H2O = GDP + phosphate + H(+). In terms of biological role, functions in mitochondrial and peroxisomal division. Mediates membrane fission through oligomerization into membrane-associated tubular structures that wrap around the scission site to constrict and sever the mitochondrial membrane through a GTP hydrolysis-dependent mechanism. The specific recruitment at scission sites is mediated by membrane receptors like MFF, MIEF1 and MIEF2 for mitochondrial membranes. While the recruitment by the membrane receptors is GTP-dependent, the following hydrolysis of GTP induces the dissociation from the receptors and allows DNM1L filaments to curl into closed rings that are probably sufficient to sever a double membrane. Acts downstream of PINK1 to promote mitochondrial fission in a PRKN-dependent manner. Plays an important role in mitochondrial fission during mitosis. Required for formation of endocytic vesicles. Through its function in mitochondrial division, ensures the survival of at least some types of postmitotic neurons, including Purkinje cells, by suppressing oxidative damage. Required for normal brain development, including that of cerebellum. Facilitates developmentally regulated apoptosis during neural tube formation. Required for a normal rate of cytochrome c release and caspase activation during apoptosis; this requirement may depend upon the cell type and the physiological apoptotic cues. Proposed to regulate synaptic vesicle membrane dynamics through association with BCL2L1 isoform Bcl-X(L) which stimulates its GTPase activity in synaptic vesicles; the function may require its recruitment by MFF to clathrin-containing vesicles. Required for programmed necrosis execution. Rhythmic control of its activity following phosphorylation at Ser-637 is essential for the circadian control of mitochondrial ATP production. Regulates postsynaptic clathrin-mediated endocytosis by positioning the endocytic zone at the postsynaptic density, independently of mitochondrial division. In Mus musculus (Mouse), this protein is Dynamin-1-like protein.